The sequence spans 101 residues: uncharacterized protein (101 aa).

The chain crosses the membrane as a helical span at residues 77-99; sequence VFSFMNGFTDGCICGTIIILCLI.

Its subcellular location is the membrane. This is an uncharacterized protein from Acanthamoeba polyphaga mimivirus (APMV).